A 577-amino-acid chain; its full sequence is F-box-like/WD repeat-containing protein TBL1X (577 aa).

The 33-residue stretch at 55 to 87 (TSDEVNFLVYRYLQESGFSHSAFTFGIESHISQ) folds into the LisH domain. The F-box-like domain occupies 92–137 (GTLVPPAALISILQKGLQYVEAEISINEDGTVFDGRPIESLSLIDA). Lys-153 is modified (N6-acetyllysine). The tract at residues 177–202 (TTSAGVSHQNPSKNREATVNGEENRA) is disordered. Ser-183 carries the phosphoserine modification. WD repeat units follow at residues 230–269 (GHES…NGGS), 286–325 (PSNK…ASTL), 327–366 (QHKG…AKQQ), 369–409 (FHSA…KTFQ), 410–449 (GHTN…CIHD), 452–500 (AHNK…CTHT), 503–542 (KHQE…LVHS), and 544–576 (RGTG…LDLR). Residue Lys-340 forms a Glycyl lysine isopeptide (Lys-Gly) (interchain with G-Cter in SUMO2) linkage.

The protein belongs to the WD repeat EBI family. Homotetramer; dimer of dimers. Component of the N-Cor repressor complex, at least composed of NCOR1, NCOR2, HDAC3, TBL1X, TBL1R, CORO2A and GPS2. Interacts with GPS2 (when sumoylated); leading to protect GPS2 against degradation by the proteasome. Component of a E3 ubiquitin ligase complex containing UBE2D1, SIAH1, CACYBP/SIP, SKP1, APC and TBL1X. Probably part of other corepressor complexes, that do not contain NCOR1 and NCOR2. Interacts with histones H2B, H3a and H4. Interacts with MECP2; recruits TBL1X to the heterochromatin foci. Interacts with USP44. In terms of tissue distribution, ubiquitous.

The protein localises to the nucleus. Functionally, F-box-like protein involved in the recruitment of the ubiquitin/19S proteasome complex to nuclear receptor-regulated transcription units. Plays an essential role in transcription activation mediated by nuclear receptors. Probably acts as integral component of corepressor complexes that mediates the recruitment of the 19S proteasome complex, leading to the subsequent proteasomal degradation of transcription repressor complexes, thereby allowing cofactor exchange. The chain is F-box-like/WD repeat-containing protein TBL1X (TBL1X) from Homo sapiens (Human).